The following is a 20-amino-acid chain: Putative beta-neurotoxin (20 aa).

Residues 1-20 form the LCN-type CS-alpha/beta domain; it reads KDGYLVGSDGCKYSCLTRPG.

As to expression, expressed by the venom gland.

Its subcellular location is the secreted. Functionally, beta toxins bind voltage-independently at site-4 of sodium channels (Nav) and shift the voltage of activation toward more negative potentials thereby affecting sodium channel activation and promoting spontaneous and repetitive firing. This Tityus pachyurus (Colombian scorpion) protein is Putative beta-neurotoxin.